The following is an 855-amino-acid chain: DNA mismatch repair protein MutS (855 aa).

Position 616 to 623 (616 to 623 (GPNMGGKS)) interacts with ATP.

This sequence belongs to the DNA mismatch repair MutS family.

This protein is involved in the repair of mismatches in DNA. It is possible that it carries out the mismatch recognition step. This protein has a weak ATPase activity. This Salmonella dublin (strain CT_02021853) protein is DNA mismatch repair protein MutS.